We begin with the raw amino-acid sequence, 312 residues long: Ribosomal protein L11 methyltransferase (312 aa).

S-adenosyl-L-methionine is bound by residues threonine 163, glycine 184, aspartate 206, and asparagine 248.

It belongs to the methyltransferase superfamily. PrmA family.

Its subcellular location is the cytoplasm. The catalysed reaction is L-lysyl-[protein] + 3 S-adenosyl-L-methionine = N(6),N(6),N(6)-trimethyl-L-lysyl-[protein] + 3 S-adenosyl-L-homocysteine + 3 H(+). Functionally, methylates ribosomal protein L11. This is Ribosomal protein L11 methyltransferase from Clostridium botulinum (strain Okra / Type B1).